Reading from the N-terminus, the 547-residue chain is MPDPTTLSAWAALAAHAPTLSDQPLRVLFDADPDRFARFHLRFEDLVLDYSKNRITGETMALLADLARQSGVEARRDAMFAGEPINTTEGRAVLHVALRDPTPTPVLVDGADVKPAIAAVLAHMEAFSEAVRSGAWTGATGKAITDVVNIGIGGSDLGPVMVVEALKAYAKPGLRVHFVSNVDGTHIAETLKGLSPETTLFLVASKTFTTQETLTNAHTARDWLVGALGEPAVARHFAALSTNAKAVSAFGIDTANMFEFWDWVGGRYSLWSAIGLPIAISVGFANFRALLDGAHAMDTHFREAPIERNLPVILGLLGVWYGDFLGARAQAVLPYDQYLHRLAAYLQQADMESNGKRTTLDGKTVAYATGAVLFGEPGTNGQHSFYQLIHQGTSLIPCDFIAPAISHNPLGRHHAILLSNFLAQTEALMRGKTEAEARAELAAQGLAGEALEALLPHKVFPGNRPTNAILVKRLDPRTLGMLIALYEHKIHVQATVWNINAYDQWGVELGKQLAKAILPELEDATISPAHDSSTNGLIALYREFSAG.

Glutamate 352 (proton donor) is an active-site residue. Residues histidine 383 and lysine 511 contribute to the active site.

This sequence belongs to the GPI family.

Its subcellular location is the cytoplasm. The enzyme catalyses alpha-D-glucose 6-phosphate = beta-D-fructose 6-phosphate. Its pathway is carbohydrate biosynthesis; gluconeogenesis. It functions in the pathway carbohydrate degradation; glycolysis; D-glyceraldehyde 3-phosphate and glycerone phosphate from D-glucose: step 2/4. Catalyzes the reversible isomerization of glucose-6-phosphate to fructose-6-phosphate. The polypeptide is Glucose-6-phosphate isomerase (Rhodospirillum rubrum (strain ATCC 11170 / ATH 1.1.1 / DSM 467 / LMG 4362 / NCIMB 8255 / S1)).